Reading from the N-terminus, the 156-residue chain is ATP synthase subunit b (156 aa).

Residues 5-27 (ITLIGQMITFAIFIGFTMKFVWP) traverse the membrane as a helical segment.

This sequence belongs to the ATPase B chain family. As to quaternary structure, F-type ATPases have 2 components, F(1) - the catalytic core - and F(0) - the membrane proton channel. F(1) has five subunits: alpha(3), beta(3), gamma(1), delta(1), epsilon(1). F(0) has three main subunits: a(1), b(2) and c(10-14). The alpha and beta chains form an alternating ring which encloses part of the gamma chain. F(1) is attached to F(0) by a central stalk formed by the gamma and epsilon chains, while a peripheral stalk is formed by the delta and b chains.

The protein localises to the cell inner membrane. Its function is as follows. F(1)F(0) ATP synthase produces ATP from ADP in the presence of a proton or sodium gradient. F-type ATPases consist of two structural domains, F(1) containing the extramembraneous catalytic core and F(0) containing the membrane proton channel, linked together by a central stalk and a peripheral stalk. During catalysis, ATP synthesis in the catalytic domain of F(1) is coupled via a rotary mechanism of the central stalk subunits to proton translocation. Component of the F(0) channel, it forms part of the peripheral stalk, linking F(1) to F(0). In Francisella tularensis subsp. holarctica (strain OSU18), this protein is ATP synthase subunit b.